A 552-amino-acid chain; its full sequence is Rhodopsin kinase GRK7 (552 aa).

Serine 36 is modified (phosphoserine; by PKA). One can recognise an RGS domain in the interval phenylalanine 56 to leucine 176. The region spanning phenylalanine 191–phenylalanine 454 is the Protein kinase domain. Residues leucine 197 to valine 205 and lysine 220 each bind ATP. Aspartate 316 acts as the Proton acceptor in catalysis. Residues lysine 455 to glutamate 520 form the AGC-kinase C-terminal domain. Cysteine 549 carries the cysteine methyl ester modification. The S-geranylgeranyl cysteine moiety is linked to residue cysteine 549. The propeptide at leucine 550–leucine 552 is removed in mature form.

The protein belongs to the protein kinase superfamily. AGC Ser/Thr protein kinase family. GPRK subfamily. In terms of assembly, interacts (when prenylated) with PDE6D; this promotes release from membranes. Autophosphorylated in vitro at Ser-490. Phosphorylation at Ser-36 is regulated by light and activated by cAMP.

Its subcellular location is the membrane. It carries out the reaction L-threonyl-[rhodopsin] + ATP = O-phospho-L-threonyl-[rhodopsin] + ADP + H(+). The enzyme catalyses L-seryl-[rhodopsin] + ATP = O-phospho-L-seryl-[rhodopsin] + ADP + H(+). Inhibited by phosphorylation of Ser-36. Retina-specific kinase involved in the shutoff of the photoresponse and adaptation to changing light conditions via cone opsin phosphorylation, including rhodopsin (RHO). The sequence is that of Rhodopsin kinase GRK7 (GRK7) from Bos taurus (Bovine).